Here is a 501-residue protein sequence, read N- to C-terminus: Ribose import ATP-binding protein RbsA (501 aa).

2 ABC transporter domains span residues 6 to 242 and 253 to 495; these read LQLS…VGRK and KHGE…VGKK. Position 38–45 (38–45) interacts with ATP; it reads GENGAGKS.

Belongs to the ABC transporter superfamily. Ribose importer (TC 3.A.1.2.1) family. The complex is composed of an ATP-binding protein (RbsA), two transmembrane proteins (RbsC) and a solute-binding protein (RbsB).

It localises to the cell inner membrane. It catalyses the reaction D-ribose(out) + ATP + H2O = D-ribose(in) + ADP + phosphate + H(+). In terms of biological role, part of the ABC transporter complex RbsABC involved in ribose import. Responsible for energy coupling to the transport system. The protein is Ribose import ATP-binding protein RbsA of Vibrio parahaemolyticus serotype O3:K6 (strain RIMD 2210633).